The sequence spans 198 residues: Probable GTP-binding protein EngB (198 aa).

The EngB-type G domain occupies 36 to 198 (SDPQFAFIGR…NLSKLQELLE (163 aa)). Residues 44 to 51 (GRSNVGKS), 70 to 74 (GRTQL), 88 to 91 (DLPG), 155 to 158 (NKID), and 182 to 184 (ISA) each bind GTP. Residues Ser-51 and Thr-72 each coordinate Mg(2+).

The protein belongs to the TRAFAC class TrmE-Era-EngA-EngB-Septin-like GTPase superfamily. EngB GTPase family. It depends on Mg(2+) as a cofactor.

Functionally, necessary for normal cell division and for the maintenance of normal septation. The protein is Probable GTP-binding protein EngB of Mesomycoplasma hyopneumoniae (strain 7448) (Mycoplasma hyopneumoniae).